Reading from the N-terminus, the 474-residue chain is Sensor protein CreC (474 aa).

Over 1–6 the chain is Periplasmic; it reads MRIGMR. A helical membrane pass occupies residues 7–27; sequence LLLGYFLLVAVAAWFVLAIFV. The Cytoplasmic segment spans residues 28-146; sequence KEVKPGVRRA…LQNPADPESS (119 aa). Residues 147–167 traverse the membrane as a helical segment; that stretch reads VMYVAAPIMDGSRLIGVLSVG. At 168 to 183 the chain is on the periplasmic side; the sequence is KPNAAMAPVIKRSERR. The helical transmembrane segment at 184–204 threads the bilayer; sequence ILWASAILLGIALVIGAGMVW. Positions 205–255 constitute an HAMP domain; it reads WINRSIARLTRYADSVTDNKPVPLPDLGSSELRKLAQALESMRVKLEGKNY. Over 205 to 474 the chain is Cytoplasmic; sequence WINRSIARLT…ASLRLHRHFT (270 aa). The 212-residue stretch at 262 to 473 folds into the Histidine kinase domain; that stretch reads ALTHELKSPL…LASLRLHRHF (212 aa). His-265 is subject to Phosphohistidine; by autocatalysis.

Autophosphorylated.

The protein resides in the cell inner membrane. It catalyses the reaction ATP + protein L-histidine = ADP + protein N-phospho-L-histidine.. In terms of biological role, member of the two-component regulatory system CreC/CreB involved in catabolic regulation. CreC may function as a membrane-associated protein kinase that phosphorylates CreB in response to environmental signals. CreC can also phosphorylate PhoB. This Escherichia coli (strain K12) protein is Sensor protein CreC (creC).